Reading from the N-terminus, the 348-residue chain is Arginine kinase Oct f 2 (348 aa).

A Phosphagen kinase N-terminal domain is found at Met1–Lys83. Gly56–Tyr60 contributes to the substrate binding site. The 237-residue stretch at Met111–Ser347 folds into the Phosphagen kinase C-terminal domain. ATP contacts are provided by residues Ser114–Arg118 and His177. Glu217 contacts substrate. Arg221 is an ATP binding site. Cys263 serves as a coordination point for substrate. ATP is bound by residues Arg272–His276 and Arg300–Glu305. Glu305 lines the substrate pocket.

This sequence belongs to the ATP:guanido phosphotransferase family. In terms of tissue distribution, muscle (at protein level).

It catalyses the reaction L-arginine + ATP = N(omega)-phospho-L-arginine + ADP + H(+). Its function is as follows. Catalyzes the reversible transfer of high energy ATP gamma-phosphate group to L-arginine. The polypeptide is Arginine kinase Oct f 2 (Amphioctopus fangsiao (Ocellated octopus)).